Consider the following 588-residue polypeptide: Aspartate--tRNA ligase (588 aa).

Position 172 (glutamate 172) interacts with L-aspartate. Residues glutamine 196–lysine 199 are aspartate. Arginine 218 serves as a coordination point for L-aspartate. Residues arginine 218 to glutamate 220 and glutamine 227 each bind ATP. Position 449 (histidine 449) interacts with L-aspartate. Glutamate 483 contributes to the ATP binding site. Position 490 (arginine 490) interacts with L-aspartate. Residue glycine 535–arginine 538 coordinates ATP.

The protein belongs to the class-II aminoacyl-tRNA synthetase family. Type 1 subfamily. In terms of assembly, homodimer.

Its subcellular location is the cytoplasm. It catalyses the reaction tRNA(Asp) + L-aspartate + ATP = L-aspartyl-tRNA(Asp) + AMP + diphosphate. Its function is as follows. Catalyzes the attachment of L-aspartate to tRNA(Asp) in a two-step reaction: L-aspartate is first activated by ATP to form Asp-AMP and then transferred to the acceptor end of tRNA(Asp). The polypeptide is Aspartate--tRNA ligase (Histophilus somni (strain 2336) (Haemophilus somnus)).